Reading from the N-terminus, the 101-residue chain is Protamine-3 (101 aa).

A disordered region spans residues 1 to 101 (MGSRCAKLST…PSPEPKQTHS (101 aa)). The segment covering 45-67 (EGEEEEEDEEEEEEEEEEEEEEQ) has biased composition (acidic residues). The residue at position 93 (S93) is a Phosphoserine.

It belongs to the protamine P3 family. As to expression, testis.

It localises to the nucleus. Its subcellular location is the chromosome. Functionally, protamines substitute for histones in the chromatin of sperm during the haploid phase of spermatogenesis. They compact sperm DNA into a highly condensed, stable and inactive complex. In Mus musculus (Mouse), this protein is Protamine-3 (Prm3).